A 272-amino-acid polypeptide reads, in one-letter code: 3-methyl-2-oxobutanoate hydroxymethyltransferase (272 aa).

The Mg(2+) site is built by aspartate 42 and aspartate 86. 3-methyl-2-oxobutanoate-binding positions include 42–43 (DS), aspartate 86, and lysine 116. A Mg(2+)-binding site is contributed by glutamate 118. Glutamate 185 functions as the Proton acceptor in the catalytic mechanism.

The protein belongs to the PanB family. Homodecamer; pentamer of dimers. Mg(2+) is required as a cofactor.

The protein localises to the cytoplasm. It carries out the reaction 3-methyl-2-oxobutanoate + (6R)-5,10-methylene-5,6,7,8-tetrahydrofolate + H2O = 2-dehydropantoate + (6S)-5,6,7,8-tetrahydrofolate. It participates in cofactor biosynthesis; (R)-pantothenate biosynthesis; (R)-pantoate from 3-methyl-2-oxobutanoate: step 1/2. Catalyzes the reversible reaction in which hydroxymethyl group from 5,10-methylenetetrahydrofolate is transferred onto alpha-ketoisovalerate to form ketopantoate. This is 3-methyl-2-oxobutanoate hydroxymethyltransferase from Prochlorococcus marinus (strain MIT 9313).